Reading from the N-terminus, the 188-residue chain is Crossover junction endodeoxyribonuclease RuvC (188 aa).

Residues Asp7, Glu68, and Asp141 contribute to the active site. Residues Asp7, Glu68, and Asp141 each contribute to the Mg(2+) site.

This sequence belongs to the RuvC family. In terms of assembly, homodimer which binds Holliday junction (HJ) DNA. The HJ becomes 2-fold symmetrical on binding to RuvC with unstacked arms; it has a different conformation from HJ DNA in complex with RuvA. In the full resolvosome a probable DNA-RuvA(4)-RuvB(12)-RuvC(2) complex forms which resolves the HJ. The cofactor is Mg(2+).

Its subcellular location is the cytoplasm. The catalysed reaction is Endonucleolytic cleavage at a junction such as a reciprocal single-stranded crossover between two homologous DNA duplexes (Holliday junction).. In terms of biological role, the RuvA-RuvB-RuvC complex processes Holliday junction (HJ) DNA during genetic recombination and DNA repair. Endonuclease that resolves HJ intermediates. Cleaves cruciform DNA by making single-stranded nicks across the HJ at symmetrical positions within the homologous arms, yielding a 5'-phosphate and a 3'-hydroxyl group; requires a central core of homology in the junction. The consensus cleavage sequence is 5'-(A/T)TT(C/G)-3'. Cleavage occurs on the 3'-side of the TT dinucleotide at the point of strand exchange. HJ branch migration catalyzed by RuvA-RuvB allows RuvC to scan DNA until it finds its consensus sequence, where it cleaves and resolves the cruciform DNA. The protein is Crossover junction endodeoxyribonuclease RuvC of Streptomyces coelicolor (strain ATCC BAA-471 / A3(2) / M145).